The primary structure comprises 126 residues: Prefoldin subunit beta (126 aa).

This sequence belongs to the prefoldin subunit beta family. As to quaternary structure, heterohexamer of two alpha and four beta subunits.

The protein resides in the cytoplasm. In terms of biological role, molecular chaperone capable of stabilizing a range of proteins. Seems to fulfill an ATP-independent, HSP70-like function in archaeal de novo protein folding. The sequence is that of Prefoldin subunit beta from Pyrobaculum neutrophilum (strain DSM 2338 / JCM 9278 / NBRC 100436 / V24Sta) (Thermoproteus neutrophilus).